Reading from the N-terminus, the 493-residue chain is Cytoplasmic tRNA 2-thiolation protein 2 (493 aa).

Ser489 carries the post-translational modification Phosphoserine.

The protein belongs to the CTU2/NCS2 family. In terms of assembly, interacts with NCS6 and URM1. May act by forming a heterodimer with NCS6.

Its subcellular location is the cytoplasm. It participates in tRNA modification; 5-methoxycarbonylmethyl-2-thiouridine-tRNA biosynthesis. Functionally, plays a central role in 2-thiolation of mcm(5)S(2)U at tRNA wobble positions of tRNA(Lys), tRNA(Glu) and tRNA(Gln). May act by forming a heterodimer with NCS6 that ligates sulfur from thiocarboxylated URM1 onto the uridine of tRNAs at wobble position. Prior mcm(5) tRNA modification by the elongator complex is required for 2-thiolation. May also be involved in protein urmylation. This chain is Cytoplasmic tRNA 2-thiolation protein 2, found in Saccharomyces cerevisiae (strain RM11-1a) (Baker's yeast).